A 242-amino-acid polypeptide reads, in one-letter code: NAD-dependent protein deacetylase (242 aa).

Residues 1-242 form the Deacetylase sirtuin-type domain; sequence MQQFEEVRTI…EFVEGLSSIK (242 aa). 8 residues coordinate NAD(+): A23, T27, F34, R35, Q102, I104, D105, and H120. Residue F34 coordinates nicotinamide. 2 residues coordinate nicotinamide: I104 and D105. Residue H120 is the Proton acceptor of the active site. Positions 128, 131, 148, and 151 each coordinate Zn(2+). Positions 187, 188, 213, and 231 each coordinate NAD(+).

Belongs to the sirtuin family. Class U subfamily. It depends on Zn(2+) as a cofactor.

It localises to the cytoplasm. It carries out the reaction N(6)-acetyl-L-lysyl-[protein] + NAD(+) + H2O = 2''-O-acetyl-ADP-D-ribose + nicotinamide + L-lysyl-[protein]. Its function is as follows. NAD-dependent protein deacetylase which modulates the activities of several enzymes which are inactive in their acetylated form. In Bacillus anthracis, this protein is NAD-dependent protein deacetylase.